Consider the following 129-residue polypeptide: Putative redox protein FMP46, mitochondrial (129 aa).

The N-terminal 21 residues, 1 to 21 (MSMFRTLQRQPRTISLFTHDL), are a transit peptide targeting the mitochondrion. The active site involves Cys-94.

Belongs to the FMP46 family.

It is found in the mitochondrion. Its function is as follows. Putative mitochondrial redox protein which could be involved in the reduction of small toxic molecules. This is Putative redox protein FMP46, mitochondrial (FMP46) from Candida glabrata (strain ATCC 2001 / BCRC 20586 / JCM 3761 / NBRC 0622 / NRRL Y-65 / CBS 138) (Yeast).